Here is a 162-residue protein sequence, read N- to C-terminus: Cyclic pyranopterin monophosphate synthase (162 aa).

Substrate is bound by residues 75–77 and 113–114; these read LCH and ME. The active site involves Asp128.

It belongs to the MoaC family. As to quaternary structure, homohexamer; trimer of dimers.

It carries out the reaction (8S)-3',8-cyclo-7,8-dihydroguanosine 5'-triphosphate = cyclic pyranopterin phosphate + diphosphate. It participates in cofactor biosynthesis; molybdopterin biosynthesis. Catalyzes the conversion of (8S)-3',8-cyclo-7,8-dihydroguanosine 5'-triphosphate to cyclic pyranopterin monophosphate (cPMP). The polypeptide is Cyclic pyranopterin monophosphate synthase (Burkholderia lata (strain ATCC 17760 / DSM 23089 / LMG 22485 / NCIMB 9086 / R18194 / 383)).